Consider the following 440-residue polypeptide: MEYTVNQLSPVKTQVTVSVPAEEANAALASAVAMFRSRTDLKGFRKGKVPSSVVEQRFKKEIVSEATTDLINVHINEIMGELKLSPLSGLDVSEAALTKGEPLEYTFSFEHAPAFDLPEYKGQAVEEEDVVVSEADIESVIERVRKNLAEVKPLSDNRPAKDGEIVSVTFEAFEDGKAIPGVRAENFELTLGEGQALPAFEELVKTIASGNEGEGDVTFPADFINTELAGRTVTMKVAVHVIKERTLPPVDDELAKKAGNFENLDKMREAITMSYKKSREDLHRSSAQKKLLDSLLATLDFPLPPAVVEQQLGQMVEEFVGQLERRGKSLESTGKTLADIQGEMRPRAEELVKTQIFLSAVALKEELTVTPQEMDAFFYRLSTQAGQDVIMLKRYYEDNGLMIMVRDKLLCDKAADLIYANALVTKVAPVEKPAGEEAQD.

Residues 163–248 form the PPIase FKBP-type domain; the sequence is GEIVSVTFEA…VHVIKERTLP (86 aa).

The protein belongs to the FKBP-type PPIase family. Tig subfamily.

It is found in the cytoplasm. It carries out the reaction [protein]-peptidylproline (omega=180) = [protein]-peptidylproline (omega=0). In terms of biological role, involved in protein export. Acts as a chaperone by maintaining the newly synthesized protein in an open conformation. Functions as a peptidyl-prolyl cis-trans isomerase. The polypeptide is Trigger factor (Solidesulfovibrio magneticus (strain ATCC 700980 / DSM 13731 / RS-1) (Desulfovibrio magneticus)).